The following is a 308-amino-acid chain: Glutaminase (308 aa).

Substrate contacts are provided by S66, N117, E161, N168, Y192, Y244, and V262.

It belongs to the glutaminase family. Homotetramer.

The enzyme catalyses L-glutamine + H2O = L-glutamate + NH4(+). This Shigella dysenteriae serotype 1 (strain Sd197) protein is Glutaminase.